The sequence spans 352 residues: Putative pectinesterase 11 (352 aa).

The helical transmembrane segment at 13-35 threads the bilayer; it reads ANYHHIIIINIFILSSITSSSMA. A glycan (N-linked (GlcNAc...) asparagine) is linked at asparagine 76. Catalysis depends on aspartate 175, which acts as the Proton donor. Aspartate 196 (nucleophile) is an active-site residue. Residue asparagine 218 is glycosylated (N-linked (GlcNAc...) asparagine). Substrate-binding residues include arginine 252 and tryptophan 254. The tract at residues 332 to 352 is disordered; it reads LRPAPSHFKNAPKQTQNKEIN. The span at 343–352 shows a compositional bias: polar residues; it reads PKQTQNKEIN.

The protein belongs to the pectinesterase family.

Its subcellular location is the membrane. The catalysed reaction is [(1-&gt;4)-alpha-D-galacturonosyl methyl ester](n) + n H2O = [(1-&gt;4)-alpha-D-galacturonosyl](n) + n methanol + n H(+). It participates in glycan metabolism; pectin degradation; 2-dehydro-3-deoxy-D-gluconate from pectin: step 1/5. Acts in the modification of cell walls via demethylesterification of cell wall pectin. The polypeptide is Putative pectinesterase 11 (PME11) (Arabidopsis thaliana (Mouse-ear cress)).